The sequence spans 179 residues: Large ribosomal subunit protein uL5 (179 aa).

This sequence belongs to the universal ribosomal protein uL5 family. Part of the 50S ribosomal subunit; part of the 5S rRNA/L5/L18/L25 subcomplex. Contacts the 5S rRNA and the P site tRNA. Forms a bridge to the 30S subunit in the 70S ribosome.

This is one of the proteins that bind and probably mediate the attachment of the 5S RNA into the large ribosomal subunit, where it forms part of the central protuberance. In the 70S ribosome it contacts protein S13 of the 30S subunit (bridge B1b), connecting the 2 subunits; this bridge is implicated in subunit movement. Contacts the P site tRNA; the 5S rRNA and some of its associated proteins might help stabilize positioning of ribosome-bound tRNAs. The chain is Large ribosomal subunit protein uL5 from Marinobacter nauticus (strain ATCC 700491 / DSM 11845 / VT8) (Marinobacter aquaeolei).